We begin with the raw amino-acid sequence, 193 residues long: dCTP deaminase (193 aa).

DCTP-binding positions include 110–115, D128, 136–138, Y171, K178, and Q182; these read RSSLAR and VLE. The Proton donor/acceptor role is filled by E138. The tract at residues 171–193 is disordered; it reads YHQRQDAKYHNQKGAVASRIDKD.

The protein belongs to the dCTP deaminase family. In terms of assembly, homotrimer.

The catalysed reaction is dCTP + H2O + H(+) = dUTP + NH4(+). The protein operates within pyrimidine metabolism; dUMP biosynthesis; dUMP from dCTP (dUTP route): step 1/2. Its function is as follows. Catalyzes the deamination of dCTP to dUTP. This Hamiltonella defensa subsp. Acyrthosiphon pisum (strain 5AT) protein is dCTP deaminase.